A 125-amino-acid chain; its full sequence is Small ribosomal subunit protein uS12m (125 aa).

It belongs to the universal ribosomal protein uS12 family.

The protein localises to the mitochondrion. Its function is as follows. Protein S12 is involved in the translation initiation step. The sequence is that of Small ribosomal subunit protein uS12m (RPS12) from Brassica napus (Rape).